A 560-amino-acid polypeptide reads, in one-letter code: Calcium-binding and coiled-coil domain-containing protein 1-A (560 aa).

Coiled-coil stretches lie at residues 156–192 (KATF…EKRI) and 367–480 (WWQE…DKML). Residues 480–517 (LMEDKTDSSPPTLSVDLSDSDDESPGDEGVSQQLGPCS) are disordered. The segment covering 487-496 (SSPPTLSVDL) has biased composition (low complexity).

The protein belongs to the CALCOCO family.

The protein localises to the cytoplasm. It is found in the nucleus. In terms of biological role, may function as a coactivator for aryl hydrocarbon and nuclear receptors. This is Calcium-binding and coiled-coil domain-containing protein 1-A (calcoco1-a) from Xenopus laevis (African clawed frog).